Reading from the N-terminus, the 333-residue chain is Glycerol-3-phosphate dehydrogenase [NAD(P)+] (333 aa).

Residues Ser-10, Phe-11, Arg-31, and Lys-105 each coordinate NADPH. Positions 105, 136, and 138 each coordinate sn-glycerol 3-phosphate. Ala-140 is a binding site for NADPH. Residues Lys-191, Asp-244, Ser-254, Arg-255, and Asn-256 each coordinate sn-glycerol 3-phosphate. Lys-191 (proton acceptor) is an active-site residue. Arg-255 contributes to the NADPH binding site. The NADPH site is built by Val-279 and Glu-281.

Belongs to the NAD-dependent glycerol-3-phosphate dehydrogenase family.

Its subcellular location is the cytoplasm. It carries out the reaction sn-glycerol 3-phosphate + NAD(+) = dihydroxyacetone phosphate + NADH + H(+). The catalysed reaction is sn-glycerol 3-phosphate + NADP(+) = dihydroxyacetone phosphate + NADPH + H(+). Its pathway is membrane lipid metabolism; glycerophospholipid metabolism. Its function is as follows. Catalyzes the reduction of the glycolytic intermediate dihydroxyacetone phosphate (DHAP) to sn-glycerol 3-phosphate (G3P), the key precursor for phospholipid synthesis. The chain is Glycerol-3-phosphate dehydrogenase [NAD(P)+] from Leptospira biflexa serovar Patoc (strain Patoc 1 / Ames).